A 96-amino-acid polypeptide reads, in one-letter code: MQAKRTILLLLLLGMVALSSCGLREKHVQGLVNKFVPAGIVKNLLQAGIHKVAKMQYGCPIIKDYCSFHCNDLEKHEGYCHGTKCKCNIPNQYELF.

The N-terminal stretch at Met1–Cys21 is a signal peptide. Positions Gly22–Gln29 are excised as a propeptide. Residues Gln56–Tyr93 form the BetaSPN-type CS-alpha/beta domain. Intrachain disulfides connect Cys59-Cys80, Cys66-Cys85, and Cys70-Cys87.

This sequence belongs to the long chain scorpion toxin family. Class 1 subfamily. In terms of tissue distribution, expressed by the venom gland.

It is found in the secreted. In terms of biological role, inhibits voltage-gated potassium channel. The protein is Neurotoxin beta-KTx 31.1 of Lychas mucronatus (Chinese swimming scorpion).